The primary structure comprises 234 residues: Thrombin-like enzyme acutin (234 aa).

Residue Met1 is a propeptide. Residues 2-225 (VIGGDECDIN…YTDWIQRNIA (224 aa)) enclose the Peptidase S1 domain. Cystine bridges form between Cys8–Cys140, Cys27–Cys43, Cys75–Cys232, Cys119–Cys186, Cys151–Cys165, and Cys176–Cys201. Asn21 is a glycosylation site (N-linked (GlcNAc...) asparagine). Active-site charge relay system residues include His42 and Asp87. Ser180 functions as the Charge relay system in the catalytic mechanism.

It belongs to the peptidase S1 family. Snake venom subfamily. Monomer. As to expression, expressed by the venom gland.

The protein resides in the secreted. Functionally, thrombin-like snake venom serine protease. Has arginyl esterase and fibrinogen clotting activities. The sequence is that of Thrombin-like enzyme acutin from Deinagkistrodon acutus (Hundred-pace snake).